Reading from the N-terminus, the 475-residue chain is Dihydrolipoyl dehydrogenase (475 aa).

FAD-binding positions include 39 to 47 (EKDAYGGTC), Lys-56, and Ala-118. A disulfide bridge connects residues Cys-47 and Cys-52. NAD(+)-binding positions include 186–190 (GGGYI), Glu-209, and 275–278 (AVGR). FAD is bound by residues Asp-318 and Ala-327. The active-site Proton acceptor is His-451.

It belongs to the class-I pyridine nucleotide-disulfide oxidoreductase family. In terms of assembly, homodimer. Requires FAD as cofactor.

It is found in the cytoplasm. It carries out the reaction N(6)-[(R)-dihydrolipoyl]-L-lysyl-[protein] + NAD(+) = N(6)-[(R)-lipoyl]-L-lysyl-[protein] + NADH + H(+). The sequence is that of Dihydrolipoyl dehydrogenase (lpdA) from Haloferax volcanii (strain ATCC 29605 / DSM 3757 / JCM 8879 / NBRC 14742 / NCIMB 2012 / VKM B-1768 / DS2) (Halobacterium volcanii).